A 346-amino-acid polypeptide reads, in one-letter code: Large ribosomal subunit protein uL3 (346 aa).

Positions 324–346 (RPPKKKPPVERPQITYVSRESKQ) are disordered.

It belongs to the universal ribosomal protein uL3 family. In terms of assembly, part of the 50S ribosomal subunit. Forms a cluster with proteins L14 and L24e.

In terms of biological role, one of the primary rRNA binding proteins, it binds directly near the 3'-end of the 23S rRNA, where it nucleates assembly of the 50S subunit. In Thermococcus kodakarensis (strain ATCC BAA-918 / JCM 12380 / KOD1) (Pyrococcus kodakaraensis (strain KOD1)), this protein is Large ribosomal subunit protein uL3.